Reading from the N-terminus, the 712-residue chain is Polyribonucleotide nucleotidyltransferase (712 aa).

2 residues coordinate Mg(2+): Asp493 and Asp499. Residues 560–622 form the KH domain; it reads PRLTKLTIDP…RDAEAAIERI (63 aa). Residues 632–700 form the S1 motif domain; it reads GEDYVGTVKG…DDGKMRLTRK (69 aa).

It belongs to the polyribonucleotide nucleotidyltransferase family. Requires Mg(2+) as cofactor.

Its subcellular location is the cytoplasm. The catalysed reaction is RNA(n+1) + phosphate = RNA(n) + a ribonucleoside 5'-diphosphate. Involved in mRNA degradation. Catalyzes the phosphorolysis of single-stranded polyribonucleotides processively in the 3'- to 5'-direction. This is Polyribonucleotide nucleotidyltransferase from Salinibacter ruber (strain DSM 13855 / M31).